Here is a 1048-residue protein sequence, read N- to C-terminus: Bifunctional heparan sulfate N-deacetylase/N-sulfotransferase (1048 aa).

Over 1-172 (MTISGGNQHN…RRCFGINVRR (172 aa)) the chain is Cytoplasmic. Residues 173–192 (CVLALLAITMVSIFYYTHYV) traverse the membrane as a helical; Signal-anchor for type II membrane protein segment. Residues 192 to 752 (VDTGVFNGLI…VRHKKIWSKT (561 aa)) form a heparan sulfate N-deacetylase region. Topologically, residues 193–1048 (DTGVFNGLIQ…WLKDDLSTGT (856 aa)) are lumenal. N-linked (GlcNAc...) asparagine glycosylation is found at Asn-388 and Asn-555. Residues 753–1048 (KNCDSLPKFL…WLKDDLSTGT (296 aa)) form a heparan sulfate N-sulfotransferase region. The active-site For sulfotransferase activity is the Lys-768. A 3'-phosphoadenylyl sulfate-binding site is contributed by 768 to 772 (KTGTT). Asn-823 carries an N-linked (GlcNAc...) asparagine glycan. 3'-phosphoadenylyl sulfate is bound at residue Ser-877. N-linked (GlcNAc...) asparagine glycosylation is present at Asn-892. Residues Cys-983 and Cys-993 are joined by a disulfide bond. 998 to 1002 (KGRQY) provides a ligand contact to 3'-phosphoadenylyl sulfate.

It belongs to the sulfotransferase 1 family. NDST subfamily. In terms of assembly, monomer.

The protein resides in the golgi apparatus membrane. The catalysed reaction is alpha-D-glucosaminyl-[heparan sulfate](n) + 3'-phosphoadenylyl sulfate = N-sulfo-alpha-D-glucosaminyl-[heparan sulfate](n) + adenosine 3',5'-bisphosphate + 2 H(+). Its pathway is glycan metabolism; heparan sulfate biosynthesis. It participates in glycan metabolism; heparin biosynthesis. Essential bifunctional enzyme that catalyzes both the N-deacetylation and the N-sulfation of glucosamine (GlcNAc) of the glycosaminoglycan in heparan sulfate. Modifies the GlcNAc-GlcA disaccharide repeating sugar backbone to make N-sulfated heparosan, a prerequisite substrate for later modifications in heparin biosynthesis. Plays a role in diffusion of morphogen wingless (wg) via its role in heparan sulfate proteoglycans (HSPGs) biosynthesis, HSPGs being required for movement of wg morphogens. Required for wg signaling during both embryonic and imaginal disk development. Also required for FGF receptor signaling. The chain is Bifunctional heparan sulfate N-deacetylase/N-sulfotransferase (sfl) from Drosophila melanogaster (Fruit fly).